The chain runs to 181 residues: Akirin-2 (181 aa).

The disordered stretch occupies residues 18–48; it reads SPAASPKRRRCAPLSPSGPSPQKYLRLEPSP. Positions 23 to 28 match the Nuclear localization signal motif; the sequence is PKRRRC. The short motif at 178-181 is the SYVS motif element; sequence SYVS.

It belongs to the akirin family. Homodimer. Interacts with actl6a/baf53a. Interacts with gmnn.

It is found in the nucleus. Molecular adapter that acts as a bridge between a variety of multiprotein complexes, and which is involved in embryonic development, immunity, myogenesis and brain development. Plays a key role in nuclear protein degradation by promoting import of proteasomes into the nucleus: acts by bridging fully assembled 20S proteasomes with nuclear import receptor ipo9. Involved in both neural precursor maintenance and terminal neural differentiation: bridges gmnn and actl6a/baf53a in neural progenitor cells, antagonizing the activity of gmnn, thereby suppressing sox2 expression. Also required for proper activation of neurod1 and neuronal differentiation. Involved in myogenesis: required for skeletal muscle formation and skeletal development, possibly by regulating expression of muscle differentiation factors. In Xenopus laevis (African clawed frog), this protein is Akirin-2.